The following is a 473-amino-acid chain: Spliceosome-associated protein CWC27 homolog (473 aa).

An N-acetylserine modification is found at Ser-2. Positions 11–166 constitute a PPIase cyclophilin-type domain; it reads TNGKVLLKTT…NPHKIKSCEV (156 aa). Basic and acidic residues predominate over residues 177 to 193; it reads REIKRPKKEKPEEEVKK. 2 disordered regions span residues 177–386 and 399–473; these read REIK…EDQT and QAIA…KERR. Residues 206 to 230 are a coiled coil; that stretch reads SFGEEAEEEEEEVNRVSQSMKGKSK. Basic and acidic residues predominate over residues 231 to 241; sequence SSHDLLKDDPH. Residues 257–275 show a composition bias toward acidic residues; the sequence is GDLDDDGEDESAEYDEYVD. Composition is skewed to basic and acidic residues over residues 276 to 287, 305 to 348, and 360 to 372; these read GDEKNLMRERIA, EVEK…KRSE, and EYRR…EALR. Residues 307 to 378 adopt a coiled-coil conformation; the sequence is EKKSVSRSEE…EALRKQQSKK (72 aa). Residue Ser-347 is modified to Phosphoserine. Acidic residues predominate over residues 405–419; that stretch reads PENDIPETEVEDDEG. Basic and acidic residues-rich tracts occupy residues 426 to 438 and 458 to 473; these read QFED…KDAS and RREE…KERR.

The protein belongs to the cyclophilin-type PPIase family. In terms of assembly, part of the activated spliceosome B/catalytic step 1 spliceosome, one of the forms of the spliceosome which has a well-formed active site but still cannot catalyze the branching reaction and is composed at least of 52 proteins, the U2, U5 and U6 snRNAs and the pre-mRNA. Recruited during early steps of activated spliceosome B maturation, it is probably one of the first proteins released from this complex as he matures to the spliceosome C complex. Component of the minor spliceosome, which splices U12-type introns.

It localises to the nucleus. Functionally, as part of the spliceosome, plays a role in pre-mRNA splicing. Probable inactive PPIase with no peptidyl-prolyl cis-trans isomerase activity. As a component of the minor spliceosome, involved in the splicing of U12-type introns in pre-mRNAs. The polypeptide is Spliceosome-associated protein CWC27 homolog (Macaca fascicularis (Crab-eating macaque)).